The sequence spans 166 residues: Interferon gamma (166 aa).

An N-terminal signal peptide occupies residues 1 to 23 (MKYTSYILALQLCVLLGFSGSYG). Q24 carries the post-translational modification Pyrrolidone carboxylic acid. 2 N-linked (GlcNAc...) asparagine glycosylation sites follow: N39 and N106.

This sequence belongs to the type II (or gamma) interferon family. Homodimer. Interacts with IFNGR1 (via extracellular domain); this interaction promotes IFNGR1 dimerization. As to expression, released primarily from activated T lymphocytes.

The protein resides in the secreted. Functionally, type II interferon produced by immune cells such as T-cells and NK cells that plays crucial roles in antimicrobial, antiviral, and antitumor responses by activating effector immune cells and enhancing antigen presentation. Primarily signals through the JAK-STAT pathway after interaction with its receptor IFNGR1 to affect gene regulation. Upon IFNG binding, IFNGR1 intracellular domain opens out to allow association of downstream signaling components JAK2, JAK1 and STAT1, leading to STAT1 activation, nuclear translocation and transcription of IFNG-regulated genes. Many of the induced genes are transcription factors such as IRF1 that are able to further drive regulation of a next wave of transcription. Plays a role in class I antigen presentation pathway by inducing a replacement of catalytic proteasome subunits with immunoproteasome subunits. In turn, increases the quantity, quality, and repertoire of peptides for class I MHC loading. Increases the efficiency of peptide generation also by inducing the expression of activator PA28 that associates with the proteasome and alters its proteolytic cleavage preference. Up-regulates as well MHC II complexes on the cell surface by promoting expression of several key molecules such as cathepsins B/CTSB, H/CTSH, and L/CTSL. Participates in the regulation of hematopoietic stem cells during development and under homeostatic conditions by affecting their development, quiescence, and differentiation. The polypeptide is Interferon gamma (IFNG) (Cervus elaphus (Red deer)).